Consider the following 278-residue polypeptide: Indole-3-glycerol phosphate synthase (278 aa).

It belongs to the TrpC family.

The enzyme catalyses 1-(2-carboxyphenylamino)-1-deoxy-D-ribulose 5-phosphate + H(+) = (1S,2R)-1-C-(indol-3-yl)glycerol 3-phosphate + CO2 + H2O. Its pathway is amino-acid biosynthesis; L-tryptophan biosynthesis; L-tryptophan from chorismate: step 4/5. This is Indole-3-glycerol phosphate synthase from Pseudomonas aeruginosa (strain UCBPP-PA14).